The sequence spans 233 residues: UPF0758 protein SRU_2338 (233 aa).

The 123-residue stretch at 110–232 (QVTCPADVAD…HTSLAERGVI (123 aa)) folds into the MPN domain. Zn(2+)-binding residues include His-181, His-183, and Asp-194. The short motif at 181-194 (HNHPSGNPEPSRED) is the JAMM motif element.

It belongs to the UPF0758 family.

This chain is UPF0758 protein SRU_2338, found in Salinibacter ruber (strain DSM 13855 / M31).